Here is a 117-residue protein sequence, read N- to C-terminus: Holo-[acyl-carrier-protein] synthase (117 aa).

D8 and E58 together coordinate Mg(2+).

This sequence belongs to the P-Pant transferase superfamily. AcpS family. Requires Mg(2+) as cofactor.

It is found in the cytoplasm. The catalysed reaction is apo-[ACP] + CoA = holo-[ACP] + adenosine 3',5'-bisphosphate + H(+). Transfers the 4'-phosphopantetheine moiety from coenzyme A to a Ser of acyl-carrier-protein. The sequence is that of Holo-[acyl-carrier-protein] synthase from Staphylococcus epidermidis (strain ATCC 35984 / DSM 28319 / BCRC 17069 / CCUG 31568 / BM 3577 / RP62A).